We begin with the raw amino-acid sequence, 372 residues long: MECSSVSVLGILLVFPLLHNLVTISGQNLPAVGLFTFGDSNFDAGNKKFLTSAPLPQNFWPYGKSRDDPKGKFSDGKIVPDFIAKFMGIPHDLPPALKPGTDVSRGASFAVGSASILGSPKDSLALNQQVRKFNQMISNWKVDYIQKSVFMISIGMEDYYNFTKNNPNAEVSAQQAFVTSVTNRFKSDINLLYSSGASKFVVHLLAPLGCLPIARQEFKTGNNCYEKLNDLAKQHNAKIGPILNEMAETKPDFQFTVFDFYNVILRRTQRNMNYRFSVTNISCCGVGTHYAYGCGLPNVHSKLCEYQRSYLYFDARHNTEKAQEAFAHLIFGADPNVIQPMNVRELMVYPVNEPMREFWEDPMDEKLSLVQY.

Positions 1-26 are cleaved as a signal peptide; that stretch reads MECSSVSVLGILLVFPLLHNLVTISG. The active-site Nucleophile is the S40. Residues N161 and N280 are each glycosylated (N-linked (GlcNAc...) asparagine). Active-site residues include D314 and H317.

It belongs to the 'GDSL' lipolytic enzyme family.

It localises to the secreted. The polypeptide is GDSL esterase/lipase At1g54020 (Arabidopsis thaliana (Mouse-ear cress)).